A 683-amino-acid polypeptide reads, in one-letter code: uncharacterized protein (683 aa).

The next 14 helical transmembrane spans lie at 12-32 (LLLY…MMGL), 41-61 (LWLG…IGLI), 84-104 (MAIA…GILF), 110-130 (GLAY…LLAP), 162-182 (IAVL…IQGV), 194-214 (FAVG…LGGM), 221-241 (QVAQ…MIAW), 377-397 (LNFV…PHIL), 413-433 (VAWA…LAAL), 495-515 (IAGL…AAAL), 548-568 (VTTA…VTSL), 573-593 (ILFL…PVLV), 603-623 (AAGA…YIIV), and 645-665 (IASG…VSLL).

Belongs to the sodium:solute symporter (SSF) (TC 2.A.21) family.

The protein localises to the cell membrane. This is an uncharacterized protein from Cupriavidus necator (strain ATCC 17699 / DSM 428 / KCTC 22496 / NCIMB 10442 / H16 / Stanier 337) (Ralstonia eutropha).